The following is an 822-amino-acid chain: General transcription factor 3C polypeptide 4 (822 aa).

At methionine 1 the chain carries N-acetylmethionine. Positions 1–41 (MNTADQARVGPADDGPAPSGEEEGEGGGEAGGKEPAADAAP) are disordered. Serine 19 bears the Phosphoserine mark. Lysine 225 is covalently cross-linked (Glycyl lysine isopeptide (Lys-Gly) (interchain with G-Cter in SUMO2)). Phosphoserine is present on residues serine 604 and serine 611. The interval 608–663 (LVDSPGMGNADDEQQEEGTSSKQVVKQGLQERSKEGDVEEPTDDSLPTTGDAGGRE) is disordered. A Glycyl lysine isopeptide (Lys-Gly) (interchain with G-Cter in SUMO2) cross-link involves residue lysine 629. Phosphoserine is present on serine 652.

This sequence belongs to the TFIIIC subunit 4 family. Part of the TFIIIC subcomplex TFIIIC2, consisting of six subunits, GTF3C1, GTF3C2, GTF3C3, GTF3C4, GTF3C5 and GTF3C6. Interacts with BRF1, GTF3C1, GTF3C2, GTF3C5, GTF3C6, POLR3C and POLR3F.

The protein resides in the nucleus. It catalyses the reaction L-lysyl-[protein] + acetyl-CoA = N(6)-acetyl-L-lysyl-[protein] + CoA + H(+). Essential for RNA polymerase III to make a number of small nuclear and cytoplasmic RNAs, including 5S RNA, tRNA, and adenovirus-associated (VA) RNA of both cellular and viral origin. Has histone acetyltransferase activity (HAT) with unique specificity for free and nucleosomal H3. May cooperate with GTF3C5 in facilitating the recruitment of TFIIIB and RNA polymerase through direct interactions with BRF1, POLR3C and POLR3F. May be localized close to the A box. This Homo sapiens (Human) protein is General transcription factor 3C polypeptide 4 (GTF3C4).